A 368-amino-acid chain; its full sequence is tRNA/tmRNA (uracil-C(5))-methyltransferase (368 aa).

5 residues coordinate S-adenosyl-L-methionine: Gln-190, Tyr-218, Asn-223, Glu-239, and Asp-301. Cys-326 serves as the catalytic Nucleophile. Residue Glu-360 is the Proton acceptor of the active site.

This sequence belongs to the class I-like SAM-binding methyltransferase superfamily. RNA M5U methyltransferase family. TrmA subfamily.

The catalysed reaction is uridine(54) in tRNA + S-adenosyl-L-methionine = 5-methyluridine(54) in tRNA + S-adenosyl-L-homocysteine + H(+). It catalyses the reaction uridine(341) in tmRNA + S-adenosyl-L-methionine = 5-methyluridine(341) in tmRNA + S-adenosyl-L-homocysteine + H(+). Its function is as follows. Dual-specificity methyltransferase that catalyzes the formation of 5-methyluridine at position 54 (m5U54) in all tRNAs, and that of position 341 (m5U341) in tmRNA (transfer-mRNA). The protein is tRNA/tmRNA (uracil-C(5))-methyltransferase of Aliivibrio salmonicida (strain LFI1238) (Vibrio salmonicida (strain LFI1238)).